The chain runs to 60 residues: Short neurotoxin 1 (60 aa).

4 disulfide bridges follow: C3-C22, C17-C39, C41-C52, and C53-C58.

Belongs to the three-finger toxin family. Short-chain subfamily. Type I alpha-neurotoxin sub-subfamily. As to expression, expressed by the venom gland.

The protein resides in the secreted. Functionally, binds to muscle nicotinic acetylcholine receptor (nAChR) and inhibit acetylcholine from binding to the receptor, thereby impairing neuromuscular transmission. The polypeptide is Short neurotoxin 1 (Dendroaspis viridis (Western green mamba)).